The sequence spans 458 residues: Argininosuccinate lyase (458 aa).

This sequence belongs to the lyase 1 family. Argininosuccinate lyase subfamily.

It is found in the cytoplasm. It catalyses the reaction 2-(N(omega)-L-arginino)succinate = fumarate + L-arginine. It functions in the pathway amino-acid biosynthesis; L-arginine biosynthesis; L-arginine from L-ornithine and carbamoyl phosphate: step 3/3. This chain is Argininosuccinate lyase, found in Neisseria meningitidis serogroup A / serotype 4A (strain DSM 15465 / Z2491).